The primary structure comprises 212 residues: 3,4-dihydroxy-2-butanone 4-phosphate synthase (212 aa).

D-ribulose 5-phosphate contacts are provided by residues 37–38 (RE), aspartate 42, 150–154 (RRGHT), and glutamate 174. Glutamate 38 is a binding site for Mg(2+). Histidine 153 is a Mg(2+) binding site.

Belongs to the DHBP synthase family. Homodimer. The cofactor is Mg(2+). Mn(2+) serves as cofactor.

The enzyme catalyses D-ribulose 5-phosphate = (2S)-2-hydroxy-3-oxobutyl phosphate + formate + H(+). The protein operates within cofactor biosynthesis; riboflavin biosynthesis; 2-hydroxy-3-oxobutyl phosphate from D-ribulose 5-phosphate: step 1/1. Catalyzes the conversion of D-ribulose 5-phosphate to formate and 3,4-dihydroxy-2-butanone 4-phosphate. This is 3,4-dihydroxy-2-butanone 4-phosphate synthase from Shewanella halifaxensis (strain HAW-EB4).